We begin with the raw amino-acid sequence, 257 residues long: Flagellar brake protein YcgR 2 (257 aa).

The PilZ domain occupies 131–244 (QRREFFRVQT…AERTLQRVVT (114 aa)).

It belongs to the YcgR family. As to quaternary structure, monomer. Interacts with the flagellar basal bodies.

The protein localises to the bacterial flagellum basal body. Functionally, acts as a flagellar brake, regulating swimming and swarming in a bis-(3'-5') cyclic diguanylic acid (c-di-GMP)-dependent manner. Binds 1 c-di-GMP dimer per subunit. Increasing levels of c-di-GMP lead to decreased motility. The polypeptide is Flagellar brake protein YcgR 2 (Paraburkholderia phytofirmans (strain DSM 17436 / LMG 22146 / PsJN) (Burkholderia phytofirmans)).